We begin with the raw amino-acid sequence, 71 residues long: General transcription and DNA repair factor IIH subunit TFB5 (71 aa).

Belongs to the TFB5 family. As to quaternary structure, component of the 7-subunit TFIIH core complex composed of XPB, XPD, TFB1/GTF2H1, GTF2H2/P44, TFB4/GTF2H3, TFB2/GTF2H4 and TFB5/GTF2H5, which is active in NER. The core complex associates with the 3-subunit CDK-activating kinase (CAK) module composed of CYCH1/cyclin H1, CDKD and MAT1/At4g30820 to form the 10-subunit holoenzyme (holo-TFIIH) active in transcription.

The protein localises to the nucleus. Component of the general transcription and DNA repair factor IIH (TFIIH) core complex, which is involved in general and transcription-coupled nucleotide excision repair (NER) of damaged DNA and, when complexed to CAK, in RNA transcription by RNA polymerase II. In NER, TFIIH acts by opening DNA around the lesion to allow the excision of the damaged oligonucleotide and its replacement by a new DNA fragment. In transcription, TFIIH has an essential role in transcription initiation. When the pre-initiation complex (PIC) has been established, TFIIH is required for promoter opening and promoter escape. Phosphorylation of the C-terminal tail (CTD) of the largest subunit of RNA polymerase II by the kinase module CAK controls the initiation of transcription. This chain is General transcription and DNA repair factor IIH subunit TFB5, found in Arabidopsis thaliana (Mouse-ear cress).